The sequence spans 401 residues: Argininosuccinate synthase (401 aa).

ATP contacts are provided by residues 11–19 and alanine 38; that span reads AYSGGLDTS. L-citrulline-binding residues include tyrosine 89 and serine 94. ATP is bound at residue glycine 119. The L-aspartate site is built by threonine 121, asparagine 125, and aspartate 126. L-citrulline is bound at residue asparagine 125. 5 residues coordinate L-citrulline: arginine 129, serine 177, serine 186, glutamate 262, and tyrosine 274.

Belongs to the argininosuccinate synthase family. Type 1 subfamily. As to quaternary structure, homotetramer.

It localises to the cytoplasm. It carries out the reaction L-citrulline + L-aspartate + ATP = 2-(N(omega)-L-arginino)succinate + AMP + diphosphate + H(+). Its pathway is amino-acid biosynthesis; L-arginine biosynthesis; L-arginine from L-ornithine and carbamoyl phosphate: step 2/3. This chain is Argininosuccinate synthase, found in Nitratidesulfovibrio vulgaris (strain DSM 19637 / Miyazaki F) (Desulfovibrio vulgaris).